Reading from the N-terminus, the 1193-residue chain is Probable cation-transporting ATPase 13A4 (1193 aa).

The Cytoplasmic segment spans residues 1-32 (MGDHLEKSQHALLNEGDENEMEIFGYRTQGCR). An intramembrane segment occupies 33 to 53 (KALCLIGSIFSLGMLPLVFYW). At 54-198 (RPAWRVWANC…DVEITPIWKL (145 aa)) the chain is on the cytoplasmic side. Residues 199-219 (LIKEVLNPFYIFQLFSVCLWF) traverse the membrane as a helical segment. Over 220–224 (SEDYK) the chain is Lumenal. A helical transmembrane segment spans residues 225–245 (EYALAIILMSVISIALTVYDL). The Cytoplasmic segment spans residues 246-401 (RQQSVKLHHL…NFKLYRDAIR (156 aa)). Residues 402–422 (FLLCLVGTATIGMVYTLCVYV) form a helical membrane-spanning segment. Over 423 to 437 (LSGEPPEEVVRKALD) the chain is Lumenal. Residues 438 to 458 (VITIAVPPALPAALTTGIIYA) form a helical membrane-spanning segment. Over 459–901 (QRRLKKKGIF…KEGRAALVTS (443 aa)) the chain is Cytoplasmic. Residue Asp-487 is the 4-aspartylphosphate intermediate of the active site. 2 residues coordinate Mg(2+): Asp-849 and Asp-853. A helical transmembrane segment spans residues 902 to 922 (FCMFKYMALYSMIQYVGVLLL). The Lumenal segment spans residues 923-933 (YWKTNSLSNYQ). The chain crosses the membrane as a helical span at residues 934-954 (FLFQDLAITTLIGVTMNLNGA). The Cytoplasmic portion of the chain corresponds to 955 to 973 (NPKLVPFRPAGRLISPPLL). A helical transmembrane segment spans residues 974-994 (LSVVLNILLSLAMHIVGFILV). Over 995-1036 (QKQPWYIMDYHSVCPVRNESASALAASPSVPEKTRSNSTFAS) the chain is Lumenal. The helical transmembrane segment at 1037 to 1057 (FENTTIWFLGTINCIFVALVF) threads the bilayer. The Cytoplasmic portion of the chain corresponds to 1058 to 1071 (SKGKPFRQPTYTNY). A helical transmembrane segment spans residues 1072–1092 (IFVLVLILQMGVCLFILFADI). The Lumenal portion of the chain corresponds to 1093–1105 (PEMHRRLDLLCTP). Residues 1106 to 1126 (VLWRVYILIMISSNFVVSLAV) traverse the membrane as a helical segment. The Cytoplasmic portion of the chain corresponds to 1127 to 1193 (EKAIIENRAL…PVFESNEEQL (67 aa)).

This sequence belongs to the cation transport ATPase (P-type) (TC 3.A.3) family. Type V subfamily. As to expression, expressed in brain and stomach.

It localises to the early endosome membrane. The protein localises to the late endosome membrane. Its subcellular location is the recycling endosome membrane. The catalysed reaction is ATP + H2O = ADP + phosphate + H(+). The protein is Probable cation-transporting ATPase 13A4 (Atp13a4) of Mus musculus (Mouse).